The sequence spans 241 residues: ATP synthase subunit a (241 aa).

Transmembrane regions (helical) follow at residues 23–43 (VSFT…AAFF), 83–103 (YFPY…LGML), 113–133 (IAVT…IGFA), 188–208 (VLAG…FAVV), and 209–229 (LGVT…FTIL).

The protein belongs to the ATPase A chain family. As to quaternary structure, F-type ATPases have 2 components, CF(1) - the catalytic core - and CF(0) - the membrane proton channel. CF(1) has five subunits: alpha(3), beta(3), gamma(1), delta(1), epsilon(1). CF(0) has four main subunits: a, b, b' and c.

The protein localises to the cell inner membrane. Functionally, key component of the proton channel; it plays a direct role in the translocation of protons across the membrane. In Rhodospirillum rubrum (strain ATCC 11170 / ATH 1.1.1 / DSM 467 / LMG 4362 / NCIMB 8255 / S1), this protein is ATP synthase subunit a.